The following is a 688-amino-acid chain: Glycine--tRNA ligase beta subunit (688 aa).

This sequence belongs to the class-II aminoacyl-tRNA synthetase family. In terms of assembly, tetramer of two alpha and two beta subunits.

Its subcellular location is the cytoplasm. It catalyses the reaction tRNA(Gly) + glycine + ATP = glycyl-tRNA(Gly) + AMP + diphosphate. This chain is Glycine--tRNA ligase beta subunit, found in Aliivibrio salmonicida (strain LFI1238) (Vibrio salmonicida (strain LFI1238)).